Consider the following 444-residue polypeptide: ATP-dependent RNA helicase SrmB (444 aa).

The Q motif motif lies at 4 to 32 (TTFSELELDESLLEALQDKGFTRPTAIQA). The 175-residue stretch at 35-209 (IPPALDGRDV…AERLLEDPVE (175 aa)) folds into the Helicase ATP-binding domain. 48 to 55 (APTGTGKT) provides a ligand contact to ATP. A DEAD box motif is present at residues 157–160 (DEAD). A Helicase C-terminal domain is found at 238-387 (LLVHLLKQPE…ELRPKTRAPS (150 aa)). Positions 382 to 391 (KTRAPSEKQT) are enriched in basic and acidic residues. The tract at residues 382–444 (KTRAPSEKQT…TGVPPQTTEE (63 aa)) is disordered. Composition is skewed to basic residues over residues 394-406 (PSKKVLAKRAEKK) and 414-432 (PRVKKRHRDTKNIGKRRKP).

It belongs to the DEAD box helicase family. SrmB subfamily. Interacts with the 50S ribosomal subunit. Forms a complex with the 50S ribosomal proteins L4 and L24, and a region near the 5'-end of 23S rRNA.

It is found in the cytoplasm. The catalysed reaction is ATP + H2O = ADP + phosphate + H(+). Functionally, DEAD-box RNA helicase involved in the assembly of the 50S ribosomal subunit at low temperature. Exhibits RNA-stimulated ATP hydrolysis and RNA unwinding activity. Acts before DeaD. The chain is ATP-dependent RNA helicase SrmB from Escherichia coli (strain K12).